The primary structure comprises 557 residues: Pectinesterase/pectinesterase inhibitor 18 (557 aa).

A signal peptide spans Met-1 to Ala-34. Residues Asn-47–Ile-203 are pectinesterase inhibitor 18. Positions Asn-246–Gly-543 are pectinesterase 18. Substrate is bound by residues Thr-321 and Gln-351. Catalysis depends on Asp-374, which acts as the Proton donor; for pectinesterase activity. Asp-395 functions as the Nucleophile; for pectinesterase activity in the catalytic mechanism. The substrate site is built by Arg-463 and Trp-465.

In the N-terminal section; belongs to the PMEI family. The protein in the C-terminal section; belongs to the pectinesterase family. In terms of tissue distribution, expressed in siliques, flowers, floral stems, rosette leaves and roots.

The protein resides in the secreted. It is found in the cell wall. It catalyses the reaction [(1-&gt;4)-alpha-D-galacturonosyl methyl ester](n) + n H2O = [(1-&gt;4)-alpha-D-galacturonosyl](n) + n methanol + n H(+). It carries out the reaction Endohydrolysis of the N-glycosidic bond at one specific adenosine on the 28S rRNA.. It participates in glycan metabolism; pectin degradation; 2-dehydro-3-deoxy-D-gluconate from pectin: step 1/5. Acts in the modification of cell walls via demethylesterification of cell wall pectin. Inhibits the elongation phase of protein synthesis. In Arabidopsis thaliana (Mouse-ear cress), this protein is Pectinesterase/pectinesterase inhibitor 18 (PME18).